The sequence spans 333 residues: Phenylalanine--tRNA ligase alpha subunit (333 aa).

Residue Glu248 participates in Mg(2+) binding.

This sequence belongs to the class-II aminoacyl-tRNA synthetase family. Phe-tRNA synthetase alpha subunit type 1 subfamily. As to quaternary structure, tetramer of two alpha and two beta subunits. It depends on Mg(2+) as a cofactor.

It is found in the cytoplasm. It carries out the reaction tRNA(Phe) + L-phenylalanine + ATP = L-phenylalanyl-tRNA(Phe) + AMP + diphosphate + H(+). The sequence is that of Phenylalanine--tRNA ligase alpha subunit from Ureaplasma urealyticum serovar 10 (strain ATCC 33699 / Western).